Here is a 338-residue protein sequence, read N- to C-terminus: Eukaryotic translation initiation factor 3 subunit H (338 aa).

An MPN domain is found at 22–154 (VQCDGLAVMK…LKAYRLTPQA (133 aa)).

This sequence belongs to the eIF-3 subunit H family. In terms of assembly, component of the eukaryotic translation initiation factor 3 (eIF-3) complex. The eIF-3 complex interacts with pix. Interacts with mxt.

Its subcellular location is the cytoplasm. Its function is as follows. Component of the eukaryotic translation initiation factor 3 (eIF-3) complex, which is involved in protein synthesis of a specialized repertoire of mRNAs and, together with other initiation factors, stimulates binding of mRNA and methionyl-tRNAi to the 40S ribosome. The eIF-3 complex specifically targets and initiates translation of a subset of mRNAs involved in cell proliferation. The polypeptide is Eukaryotic translation initiation factor 3 subunit H (Drosophila melanogaster (Fruit fly)).